A 184-amino-acid polypeptide reads, in one-letter code: MTALSVNDYLRQHIRTVPDWPAPGVQFRDITPLLQNPKVFRVLIDAFVHRYMDRALRPDVVAGLDARGFILGAVVAYELNVGFVPIRKKGKLPFTTVEETYELEYGSATVELHADAVQPGDRVLLIDDLIATGGTMMAGKKLLEKLGATVMEGAAIVDLPELGGSERLRASGLPLYTLVDFSGH.

This sequence belongs to the purine/pyrimidine phosphoribosyltransferase family. Homodimer.

Its subcellular location is the cytoplasm. The catalysed reaction is AMP + diphosphate = 5-phospho-alpha-D-ribose 1-diphosphate + adenine. It participates in purine metabolism; AMP biosynthesis via salvage pathway; AMP from adenine: step 1/1. Catalyzes a salvage reaction resulting in the formation of AMP, that is energically less costly than de novo synthesis. In Acidovorax sp. (strain JS42), this protein is Adenine phosphoribosyltransferase.